The following is a 337-amino-acid chain: Holliday junction branch migration complex subunit RuvB (337 aa).

The interval 4–184 (ADRLIQPQVL…FGIPLRLEFY (181 aa)) is large ATPase domain (RuvB-L). ATP is bound by residues Arg-24, Gly-65, Lys-68, Thr-69, Thr-70, 131–133 (EDY), Arg-174, Tyr-184, and Arg-221. Thr-69 lines the Mg(2+) pocket. Residues 185–255 (NVKDLCTIVT…VAQQALDMLD (71 aa)) form a small ATPAse domain (RuvB-S) region. Residues 258–337 (QEGFDYLDRK…FNIITPDVPK (80 aa)) are head domain (RuvB-H). DNA is bound by residues Arg-294, Arg-313, and Arg-318.

The protein belongs to the RuvB family. Homohexamer. Forms an RuvA(8)-RuvB(12)-Holliday junction (HJ) complex. HJ DNA is sandwiched between 2 RuvA tetramers; dsDNA enters through RuvA and exits via RuvB. An RuvB hexamer assembles on each DNA strand where it exits the tetramer. Each RuvB hexamer is contacted by two RuvA subunits (via domain III) on 2 adjacent RuvB subunits; this complex drives branch migration. In the full resolvosome a probable DNA-RuvA(4)-RuvB(12)-RuvC(2) complex forms which resolves the HJ.

Its subcellular location is the cytoplasm. It carries out the reaction ATP + H2O = ADP + phosphate + H(+). Its function is as follows. The RuvA-RuvB-RuvC complex processes Holliday junction (HJ) DNA during genetic recombination and DNA repair, while the RuvA-RuvB complex plays an important role in the rescue of blocked DNA replication forks via replication fork reversal (RFR). RuvA specifically binds to HJ cruciform DNA, conferring on it an open structure. The RuvB hexamer acts as an ATP-dependent pump, pulling dsDNA into and through the RuvAB complex. RuvB forms 2 homohexamers on either side of HJ DNA bound by 1 or 2 RuvA tetramers; 4 subunits per hexamer contact DNA at a time. Coordinated motions by a converter formed by DNA-disengaged RuvB subunits stimulates ATP hydrolysis and nucleotide exchange. Immobilization of the converter enables RuvB to convert the ATP-contained energy into a lever motion, pulling 2 nucleotides of DNA out of the RuvA tetramer per ATP hydrolyzed, thus driving DNA branch migration. The RuvB motors rotate together with the DNA substrate, which together with the progressing nucleotide cycle form the mechanistic basis for DNA recombination by continuous HJ branch migration. Branch migration allows RuvC to scan DNA until it finds its consensus sequence, where it cleaves and resolves cruciform DNA. The chain is Holliday junction branch migration complex subunit RuvB from Shewanella denitrificans (strain OS217 / ATCC BAA-1090 / DSM 15013).